A 424-amino-acid chain; its full sequence is Tyrosine--tRNA ligase (424 aa).

Tyr37 provides a ligand contact to L-tyrosine. Residues 42–51 (ITADSLHVGH) carry the 'HIGH' region motif. L-tyrosine is bound by residues Tyr175 and Gln179. A 'KMSKS' region motif is present at residues 235–239 (KFGKT). Lys238 contacts ATP. The S4 RNA-binding domain maps to 356 to 414 (GNLQQLLVYSRLALSRSHAKSMIVSNSVRINNIIQNNPFYILCNRDKMYHKYTLLSRGK).

Belongs to the class-I aminoacyl-tRNA synthetase family. TyrS type 1 subfamily. Homodimer.

It localises to the cytoplasm. It catalyses the reaction tRNA(Tyr) + L-tyrosine + ATP = L-tyrosyl-tRNA(Tyr) + AMP + diphosphate + H(+). Its function is as follows. Catalyzes the attachment of tyrosine to tRNA(Tyr) in a two-step reaction: tyrosine is first activated by ATP to form Tyr-AMP and then transferred to the acceptor end of tRNA(Tyr). In Buchnera aphidicola subsp. Baizongia pistaciae (strain Bp), this protein is Tyrosine--tRNA ligase.